A 159-amino-acid polypeptide reads, in one-letter code: Major allergen Pyr c 1 (159 aa).

The protein belongs to the BetVI family.

This is Major allergen Pyr c 1 (PYRC1) from Pyrus communis (Pear).